A 95-amino-acid chain; its full sequence is Large ribosomal subunit protein bL21 (95 aa).

Belongs to the bacterial ribosomal protein bL21 family. In terms of assembly, part of the 50S ribosomal subunit. Contacts protein L20.

Its function is as follows. This protein binds to 23S rRNA in the presence of protein L20. This chain is Large ribosomal subunit protein bL21, found in Prosthecochloris vibrioformis (Chlorobium vibrioforme).